Reading from the N-terminus, the 387-residue chain is Alkanesulfonate monooxygenase (387 aa).

It belongs to the SsuD family.

It carries out the reaction an alkanesulfonate + FMNH2 + O2 = an aldehyde + FMN + sulfite + H2O + 2 H(+). In terms of biological role, catalyzes the desulfonation of aliphatic sulfonates. This Ralstonia pickettii (strain 12J) protein is Alkanesulfonate monooxygenase.